Reading from the N-terminus, the 242-residue chain is Cysteine desulfuration protein SufE (242 aa).

C148 (cysteine persulfide intermediate) is an active-site residue.

Belongs to the SufE family. In terms of assembly, monomer. Interacts with SufS; interaction enhances cysteine desulfurase activity of SufS.

The protein localises to the plastid. Its subcellular location is the apicoplast. It participates in cofactor biosynthesis; iron-sulfur cluster biosynthesis. Functionally, participates in sulfur mobilization (SUF) pathway for iron-sulfur (Fe-S) cluster biogenesis. Enhances cysteine desulfurase activity of SufS. Probably functions as a sulfur acceptor for SufS. In Plasmodium vivax, this protein is Cysteine desulfuration protein SufE.